We begin with the raw amino-acid sequence, 427 residues long: 3-phosphoshikimate 1-carboxyvinyltransferase (427 aa).

3-phosphoshikimate is bound by residues Lys22, Ser23, and Arg27. Lys22 contributes to the phosphoenolpyruvate binding site. Phosphoenolpyruvate contacts are provided by Gly96 and Arg124. Residues Ser170, Ser171, Gln172, Ser198, Asp314, Asn337, and Lys341 each contribute to the 3-phosphoshikimate site. Position 172 (Gln172) interacts with phosphoenolpyruvate. Asp314 acts as the Proton acceptor in catalysis. Phosphoenolpyruvate contacts are provided by Arg345, Arg387, and Lys412.

The protein belongs to the EPSP synthase family. Monomer.

The protein resides in the cytoplasm. The catalysed reaction is 3-phosphoshikimate + phosphoenolpyruvate = 5-O-(1-carboxyvinyl)-3-phosphoshikimate + phosphate. Its pathway is metabolic intermediate biosynthesis; chorismate biosynthesis; chorismate from D-erythrose 4-phosphate and phosphoenolpyruvate: step 6/7. Catalyzes the transfer of the enolpyruvyl moiety of phosphoenolpyruvate (PEP) to the 5-hydroxyl of shikimate-3-phosphate (S3P) to produce enolpyruvyl shikimate-3-phosphate and inorganic phosphate. The protein is 3-phosphoshikimate 1-carboxyvinyltransferase of Sulfurovum sp. (strain NBC37-1).